The sequence spans 1216 residues: 1-phosphatidylinositol 4,5-bisphosphate phosphodiesterase beta-1 (1216 aa).

A lipid anchor (S-palmitoyl cysteine) is attached at Cys17. Position 236 is a phosphoserine (Ser236). In terms of domain architecture, PI-PLC X-box spans 316–467 (EDMSQPLSHY…LMYKILVKNK (152 aa)). Active-site residues include His331 and His378. Phosphoserine is present on Ser417. The segment at 469-534 (KSHKSSEGSG…MDEGTAGSEA (66 aa)) is disordered. Basic and acidic residues predominate over residues 472 to 483 (KSSEGSGKKKLS). The segment covering 491 to 501 (SDSSSVFEPSS) has biased composition (low complexity). Acidic residues predominate over residues 507–518 (ADTESDDDDDDD). Position 509 is a phosphothreonine (Thr509). Phosphoserine occurs at positions 511 and 582. The PI-PLC Y-box domain maps to 540–656 (MSNLVNYIQP…GYRLKPEFMR (117 aa)). The C2 domain maps to 656–784 (RRPDKHFDPF…CLRNERNQPL (129 aa)). 4 disordered regions span residues 834-891 (DEEE…VKAP), 933-993 (LVKR…IEQD), 1071-1095 (KMDK…EEEK), and 1172-1216 (KISE…DTPL). Ser887 bears the Phosphoserine; by PKC mark. Basic and acidic residues-rich tracts occupy residues 941-951 (TTDLIKEHTTK) and 959-979 (YLRR…KKSE). Ser978 and Ser987 each carry phosphoserine. Polar residues predominate over residues 980–991 (PSSPDHVSSTIE). The span at 1075 to 1095 (KRQEKITEAKSKDKSQMEEEK) shows a compositional bias: basic and acidic residues. Residues 1187–1198 (TSDSGKLNQKPP) are compositionally biased toward polar residues. A phosphoserine mark is found at Ser1199 and Ser1200. Basic and acidic residues predominate over residues 1207 to 1216 (NPGKEFDTPL).

Interacts with DGKQ. Ca(2+) is required as a cofactor. In terms of processing, palmitoylated. Palmitoylation at Cys-17 by ZDHHC21 regulates the signaling activity of PLCB1 and the function of the endothelial barrier. Palmitoylation by ZDHHC21 is stimulated by inflammation.

The protein resides in the nucleus membrane. It is found in the cytoplasm. It carries out the reaction a 1,2-diacyl-sn-glycero-3-phospho-(1D-myo-inositol-4,5-bisphosphate) + H2O = 1D-myo-inositol 1,4,5-trisphosphate + a 1,2-diacyl-sn-glycerol + H(+). It catalyses the reaction a 1,2-diacyl-sn-glycero-3-phospho-(1D-myo-inositol) + H2O = 1D-myo-inositol 1-phosphate + a 1,2-diacyl-sn-glycerol + H(+). Functionally, catalyzes the hydrolysis of 1-phosphatidylinositol 4,5-bisphosphate into diacylglycerol (DAG) and inositol 1,4,5-trisphosphate (IP3) and mediates intracellular signaling downstream of G protein-coupled receptors. Regulates the function of the endothelial barrier. The sequence is that of 1-phosphatidylinositol 4,5-bisphosphate phosphodiesterase beta-1 (PLCB1) from Bos taurus (Bovine).